Here is a 457-residue protein sequence, read N- to C-terminus: Cysteine--tRNA ligase (457 aa).

Cysteine 28 lines the Zn(2+) pocket. The 'HIGH' region signature appears at 30–40 (PTVYDTAHIGN). Zn(2+) contacts are provided by cysteine 212, histidine 237, and glutamate 241. The short motif at 270–274 (KMSKS) is the 'KMSKS' region element. Lysine 273 is a binding site for ATP.

The protein belongs to the class-I aminoacyl-tRNA synthetase family. As to quaternary structure, monomer. Zn(2+) serves as cofactor.

It localises to the cytoplasm. The enzyme catalyses tRNA(Cys) + L-cysteine + ATP = L-cysteinyl-tRNA(Cys) + AMP + diphosphate. The polypeptide is Cysteine--tRNA ligase (Wolbachia pipientis wMel).